Reading from the N-terminus, the 312-residue chain is Small kinetochore-associated protein (312 aa).

The segment at 1–171 (MAAPEAEAQE…PFNKQKPEEE (171 aa)) is disordered. Residues 131–143 (DVTKVTKSRRENG) are compositionally biased toward basic and acidic residues. The segment at 156-312 (LRNSYKPFNK…LEEMEQLLEM (157 aa)) is interaction with SPAG5. Coiled-coil stretches lie at residues 166–210 (QKPE…LEKF) and 246–287 (LLET…QFLE).

Part of an astrin (SPAG5)-kinastrin (SKAP) complex containing KNSTRN, SPAG5, PLK1, DYNLL1 and SGO2A. Interacts with SPAG5. Directly binds to microtubules, although at relatively low affinity. Interacts with CENPE; this interaction greatly favors microtubule-binding. Interacts with DSN1/MIS13; leading to localization to kinetochores. Interacts with MAPRE1/EB1; leading to localization to the microtubule plus ends. Interacts with PRPF19. Interacts with DYNLL1. Interacts with MAP4.

It localises to the nucleus. Its subcellular location is the chromosome. The protein localises to the centromere. It is found in the kinetochore. The protein resides in the cytoplasm. It localises to the cytoskeleton. Its subcellular location is the spindle pole. The protein localises to the microtubule organizing center. Essential component of the mitotic spindle required for faithful chromosome segregation and progression into anaphase. Promotes the metaphase-to-anaphase transition and is required for chromosome alignment, normal timing of sister chromatid segregation, and maintenance of spindle pole architecture. The astrin (SPAG5)-kinastrin (SKAP) complex promotes stable microtubule-kinetochore attachments. Required for kinetochore oscillations and dynamics of microtubule plus-ends during live cell mitosis, possibly by forming a link between spindle microtubule plus-ends and mitotic chromosomes to achieve faithful cell division. The chain is Small kinetochore-associated protein (Knstrn) from Mus musculus (Mouse).